The chain runs to 341 residues: Radial spoke head 14 homolog (341 aa).

ARM repeat units lie at residues 16 to 55 (PTKA…DLMH), 57 to 96 (PEYV…IMAT), 99 to 138 (VGRV…LAQL), 139 to 178 (PKGA…LCLQ), 180 to 217 (DATE…AISI), 219 to 258 (LDGK…HATV), 260 to 300 (TEGK…MLAE), and 302 to 339 (PEGR…VIEW).

It belongs to the flagellar radial spoke RSP14 family. As to quaternary structure, component of the axonemal radial spoke complex 1 (RS1), at least composed of spoke head proteins RSPH1, RSPH3, RSPH9 and the cilia-specific component RSPH4A or sperm-specific component RSPH6A, spoke stalk proteins RSPH14, DNAJB13, DYDC1, ROPN1L and NME5, and the anchor protein IQUB.

Its subcellular location is the cytoplasm. The protein resides in the cytoskeleton. The protein localises to the flagellum axoneme. Its function is as follows. Functions as part of axonemal radial spoke complexes that play an important part in the motility of sperm and cilia. In Mus musculus (Mouse), this protein is Radial spoke head 14 homolog.